A 191-amino-acid chain; its full sequence is Glycerol-3-phosphate acyltransferase (191 aa).

Helical transmembrane passes span 7 to 27, 51 to 71, 80 to 100, 115 to 135, 139 to 159, and 161 to 181; these read ILVLSYLIGSIPFGLILSYIG, KLAVVTLILDSLKGFVSVMLA, FVFMSALFSIIGHMFPVWLSF, FIEYKFVIYFTIFWIIVFVIF, SLSSIISTISIMLLVYTHYSA, and ESITFLVMSLLVIVQHIENIV.

The protein belongs to the PlsY family. As to quaternary structure, probably interacts with PlsX.

It is found in the cell inner membrane. The catalysed reaction is an acyl phosphate + sn-glycerol 3-phosphate = a 1-acyl-sn-glycero-3-phosphate + phosphate. The protein operates within lipid metabolism; phospholipid metabolism. Its function is as follows. Catalyzes the transfer of an acyl group from acyl-phosphate (acyl-PO(4)) to glycerol-3-phosphate (G3P) to form lysophosphatidic acid (LPA). This enzyme utilizes acyl-phosphate as fatty acyl donor, but not acyl-CoA or acyl-ACP. The sequence is that of Glycerol-3-phosphate acyltransferase from Ehrlichia canis (strain Jake).